A 551-amino-acid polypeptide reads, in one-letter code: Calcium-dependent protein kinase 3 (551 aa).

The segment at 1–57 (MGNCCRSPAAAAREDVKSSHFPASAGKKKPHQARNGGVGGGGGGGGGGGGGGGAGQK) is disordered. The N-myristoyl glycine moiety is linked to residue G2. Positions 36-55 (GGVGGGGGGGGGGGGGGGAG) are enriched in gly residues. One can recognise a Protein kinase domain in the interval 77 to 335 (YALDRELGRG…AKQVLEHPWL (259 aa)). ATP-binding positions include 83–91 (LGRGEFGVT) and K106. Residue D201 is the Proton acceptor of the active site. Residues 341–371 (APNVPLGDIVKSRLKQFSRMNRFKRRALRVI) are autoinhibitory domain. EF-hand domains are found at residues 378–413 (EEVE…FGSH), 414–449 (LAES…LQRM), 450–485 (ANDE…DGAG), and 486–521 (DSME…GTDW). Residues D391, D393, D395, E402, D427, N429, E438, D463, D465, N467, Y469, E474, D499, D501, D503, K505, and E510 each contribute to the Ca(2+) site.

This sequence belongs to the protein kinase superfamily. Ser/Thr protein kinase family. CDPK subfamily. Expressed in roots and developing seeds.

It localises to the membrane. The catalysed reaction is L-seryl-[protein] + ATP = O-phospho-L-seryl-[protein] + ADP + H(+). It catalyses the reaction L-threonyl-[protein] + ATP = O-phospho-L-threonyl-[protein] + ADP + H(+). Its activity is regulated as follows. Activated by calcium. Autophosphorylation may play an important role in the regulation of the kinase activity. Functionally, may play a role in signal transduction pathways that involve calcium as a second messenger. The polypeptide is Calcium-dependent protein kinase 3 (Oryza sativa subsp. japonica (Rice)).